The following is a 673-amino-acid chain: UvrABC system protein B (673 aa).

Residues 26-183 (EGLEDGLAHQ…RRLAELQYAR (158 aa)) form the Helicase ATP-binding domain. 39–46 (GVTGSGKT) is an ATP binding site. The short motif at 92–115 (YYDYYQPEAYVPSSDTFIEKDASV) is the Beta-hairpin element. The region spanning 431–597 (QVDDLLSEIR…GLNKKVVDIL (167 aa)) is the Helicase C-terminal domain. Residues 633–668 (QQKIHELEGLMMQHAQNLEFEEAAQVRDQLHQLRQL) form the UVR domain.

Belongs to the UvrB family. Forms a heterotetramer with UvrA during the search for lesions. Interacts with UvrC in an incision complex.

It localises to the cytoplasm. In terms of biological role, the UvrABC repair system catalyzes the recognition and processing of DNA lesions. A damage recognition complex composed of 2 UvrA and 2 UvrB subunits scans DNA for abnormalities. Upon binding of the UvrA(2)B(2) complex to a putative damaged site, the DNA wraps around one UvrB monomer. DNA wrap is dependent on ATP binding by UvrB and probably causes local melting of the DNA helix, facilitating insertion of UvrB beta-hairpin between the DNA strands. Then UvrB probes one DNA strand for the presence of a lesion. If a lesion is found the UvrA subunits dissociate and the UvrB-DNA preincision complex is formed. This complex is subsequently bound by UvrC and the second UvrB is released. If no lesion is found, the DNA wraps around the other UvrB subunit that will check the other stand for damage. The polypeptide is UvrABC system protein B (Enterobacter sp. (strain 638)).